A 251-amino-acid chain; its full sequence is Blue-light absorbing proteorhodopsin (251 aa).

An N-terminal signal peptide occupies residues 1–18 (MGKLLLILGSAIALPSFA). The next 7 helical transmembrane spans lie at 30-50 (VGVS…FFFV), 65-85 (VSGL…GVWI), 97-117 (IDWL…LAAC), 120-140 (VAAS…GAGF), 144-164 (AGLA…LYMI), 190-210 (MMMI…AGYL), and 223-243 (LIYN…IWNV). At lysine 233 the chain carries N6-(retinylidene)lysine.

The protein belongs to the archaeal/bacterial/fungal opsin family. Post-translationally, contains one covalently linked retinal chromophore.

It localises to the cell membrane. Its function is as follows. Light-driven proton pump. May have a regulatory rather than energy harvesting function, based on light-induced opening of proton channels, to modulate cell physiology depending on light intensity variations. Could be, therefore, a sensory rhodopsin, potentially associated with a transducer component. The chain is Blue-light absorbing proteorhodopsin from Gamma-proteobacterium Hot 75m4.